Here is a 241-residue protein sequence, read N- to C-terminus: Interleukin-6 (241 aa).

Residues 1-25 form a disordered region; the sequence is MNFTEGCEATGRRPGSAGSRRRRAP. An N-terminal signal peptide occupies residues 1–46; that stretch reads MNFTEGCEATGRRPGSAGSRRRRAPRPGPVALLPLLLPLLLPPAAA. An intrachain disulfide couples cysteine 122 to cysteine 132.

It belongs to the IL-6 superfamily. Component of a hexamer of two molecules each of IL6, IL6R and IL6ST; first binds to IL6R to associate with the signaling subunit IL6ST.

It is found in the secreted. In terms of biological role, cytokine with a wide variety of biological functions in immunity, tissue regeneration, and metabolism. Binds to IL6R, then the complex associates to the signaling subunit IL6ST/gp130 to trigger the intracellular IL6-signaling pathway. The interaction with the membrane-bound IL6R and IL6ST stimulates 'classic signaling', whereas the binding of IL6 and soluble IL6R to IL6ST stimulates 'trans-signaling'. Alternatively, 'cluster signaling' occurs when membrane-bound IL6:IL6R complexes on transmitter cells activate IL6ST receptors on neighboring receiver cells. The chain is Interleukin-6 (IL6) from Gallus gallus (Chicken).